Consider the following 412-residue polypeptide: Multifunctional CCA protein (412 aa).

ATP is bound by residues Gly-8 and Arg-11. Residues Gly-8 and Arg-11 each contribute to the CTP site. Residues Asp-21 and Asp-23 each contribute to the Mg(2+) site. ATP contacts are provided by Arg-91, Arg-137, and Arg-140. CTP contacts are provided by Arg-91, Arg-137, and Arg-140. In terms of domain architecture, HD spans 228-329 (TGIHTLMTLS…VKLFDSIDAW (102 aa)).

Belongs to the tRNA nucleotidyltransferase/poly(A) polymerase family. Bacterial CCA-adding enzyme type 1 subfamily. Monomer. Can also form homodimers and oligomers. Mg(2+) is required as a cofactor. Ni(2+) serves as cofactor.

The catalysed reaction is a tRNA precursor + 2 CTP + ATP = a tRNA with a 3' CCA end + 3 diphosphate. It carries out the reaction a tRNA with a 3' CCA end + 2 CTP + ATP = a tRNA with a 3' CCACCA end + 3 diphosphate. Its function is as follows. Catalyzes the addition and repair of the essential 3'-terminal CCA sequence in tRNAs without using a nucleic acid template. Adds these three nucleotides in the order of C, C, and A to the tRNA nucleotide-73, using CTP and ATP as substrates and producing inorganic pyrophosphate. tRNA 3'-terminal CCA addition is required both for tRNA processing and repair. Also involved in tRNA surveillance by mediating tandem CCA addition to generate a CCACCA at the 3' terminus of unstable tRNAs. While stable tRNAs receive only 3'-terminal CCA, unstable tRNAs are marked with CCACCA and rapidly degraded. The sequence is that of Multifunctional CCA protein from Escherichia coli (strain SE11).